We begin with the raw amino-acid sequence, 528 residues long: Abrin-a (528 aa).

Glutamine 1 carries the post-translational modification Pyrrolidone carboxylic acid. The active site involves glutamate 164. Cystine bridges form between cysteine 247/cysteine 269, cysteine 286/cysteine 305, and cysteine 329/cysteine 346. The Ricin B-type lectin 1 domain maps to 273 to 400 (YEPTVRIGGR…YLMRQGWRTG (128 aa)). The stretch at 283-325 (DGMCVDVYDNGYHNGNRIIMWKCKDRLEENQLWTLKSDKTIRS) is one 1-alpha repeat. The stretch at 326 to 366 (NGKCLTTYGYAPGSYVMIYDCTSAVAEATYWEIWDNGTIIN) is one 1-beta repeat. N-linked (GlcNAc...) asparagine glycosylation is found at asparagine 361 and asparagine 401. The stretch at 369–401 (SALVLSAESSSMGGTLTVQTNEYLMRQGWRTGN) is one 1-gamma repeat. The 125-residue stretch at 403–527 (TSPFVTSISG…GKPNQIWLTL (125 aa)) folds into the Ricin B-type lectin 2 domain. The stretch at 414–449 (SDLCMQAQGSNVWMADCDSNKKEQQWALYTDGSIRS) is one 2-alpha repeat. Cystine bridges form between cysteine 417/cysteine 430 and cysteine 456/cysteine 473. The 2-beta repeat unit spans residues 453–492 (TNNCLTSKDHKQGSTILLMGCSNGWASQRWVFKNDGSIYS). One copy of the 2-gamma repeat lies at 495 to 528 (DDMVMDVKGSDPSLKQIILWPYTGKPNQIWLTLF).

It in the N-terminal section; belongs to the ribosome-inactivating protein family. Type 2 RIP subfamily. As to quaternary structure, disulfide-linked dimer of A and B chains.

It catalyses the reaction Endohydrolysis of the N-glycosidic bond at one specific adenosine on the 28S rRNA.. Functionally, the A chain is responsible for inhibiting protein synthesis through the catalytic inactivation of 60S ribosomal subunits by removing adenine from position 4,324 of 28S rRNA. Abrin-a is more toxic than ricin. In terms of biological role, the B chain is a galactose-specific lectin that facilitates the binding of abrin to the cell membrane that precedes endocytosis. This is Abrin-a from Abrus precatorius (Indian licorice).